The primary structure comprises 360 residues: Peptide chain release factor 1 (360 aa).

At Gln235 the chain carries N5-methylglutamine. A disordered region spans residues Arg286–Pro313.

The protein belongs to the prokaryotic/mitochondrial release factor family. In terms of processing, methylated by PrmC. Methylation increases the termination efficiency of RF1.

Its subcellular location is the cytoplasm. Its function is as follows. Peptide chain release factor 1 directs the termination of translation in response to the peptide chain termination codons UAG and UAA. The chain is Peptide chain release factor 1 from Cronobacter sakazakii (strain ATCC BAA-894) (Enterobacter sakazakii).